We begin with the raw amino-acid sequence, 222 residues long: Triosephosphate isomerase (222 aa).

Residue Asn-9–Lys-11 participates in substrate binding. His-93 (electrophile) is an active-site residue. Glu-141 (proton acceptor) is an active-site residue. Residues Ile-146, Gly-181, and Ala-202–Ser-203 contribute to the substrate site.

This sequence belongs to the triosephosphate isomerase family. As to quaternary structure, homotetramer; dimer of dimers.

It is found in the cytoplasm. It carries out the reaction D-glyceraldehyde 3-phosphate = dihydroxyacetone phosphate. It participates in carbohydrate biosynthesis; gluconeogenesis. The protein operates within carbohydrate degradation; glycolysis; D-glyceraldehyde 3-phosphate from glycerone phosphate: step 1/1. Involved in the gluconeogenesis. Catalyzes stereospecifically the conversion of dihydroxyacetone phosphate (DHAP) to D-glyceraldehyde-3-phosphate (G3P). This Methanobrevibacter smithii (strain ATCC 35061 / DSM 861 / OCM 144 / PS) protein is Triosephosphate isomerase.